We begin with the raw amino-acid sequence, 365 residues long: tRNA/tmRNA (uracil-C(5))-methyltransferase (365 aa).

S-adenosyl-L-methionine-binding residues include glutamine 189, tyrosine 217, asparagine 222, glutamate 238, and aspartate 298. The Nucleophile role is filled by cysteine 323. Residue glutamate 357 is the Proton acceptor of the active site.

This sequence belongs to the class I-like SAM-binding methyltransferase superfamily. RNA M5U methyltransferase family. TrmA subfamily.

It carries out the reaction uridine(54) in tRNA + S-adenosyl-L-methionine = 5-methyluridine(54) in tRNA + S-adenosyl-L-homocysteine + H(+). It catalyses the reaction uridine(341) in tmRNA + S-adenosyl-L-methionine = 5-methyluridine(341) in tmRNA + S-adenosyl-L-homocysteine + H(+). Its function is as follows. Dual-specificity methyltransferase that catalyzes the formation of 5-methyluridine at position 54 (m5U54) in all tRNAs, and that of position 341 (m5U341) in tmRNA (transfer-mRNA). This chain is tRNA/tmRNA (uracil-C(5))-methyltransferase, found in Shewanella loihica (strain ATCC BAA-1088 / PV-4).